We begin with the raw amino-acid sequence, 552 residues long: Serine protease 53 (552 aa).

Residues M1–A23 form the signal peptide. 2 consecutive Peptidase S1 domains span residues A24–H273 and V294–W525. The disordered stretch occupies residues A27–G46. C62 and C78 are oxidised to a cystine. Residues H77 and D128 each act as charge relay system in the active site. Cystine bridges form between C158–C230, C187–C209, C220–C249, and C326–C342. Catalysis depends on charge relay system residues S224, H341, and D382. Cystine bridges form between C443-C463 and C473-C501. S477 functions as the Charge relay system in the catalytic mechanism.

It belongs to the peptidase S1 family.

The protein localises to the secreted. In vitro can degrade the fibrinogen alpha chain of as well as pro-urokinase-type plasminogen activator. The polypeptide is Serine protease 53 (Prss53) (Mus musculus (Mouse)).